We begin with the raw amino-acid sequence, 88 residues long: Large ribosomal subunit protein bL27 (88 aa).

The segment at 1–24 (MATKKSGGSSGNGRDSRGRRLGVK) is disordered.

Belongs to the bacterial ribosomal protein bL27 family.

The sequence is that of Large ribosomal subunit protein bL27 from Ehrlichia canis (strain Jake).